Consider the following 172-residue polypeptide: Scytalone dehydratase-like protein Arp1 (172 aa).

Residue Tyr-49 participates in substrate binding. Catalysis depends on residues His-84 and His-109. Asn-130 contributes to the substrate binding site.

This sequence belongs to the scytalone dehydratase family. Homotrimer. Each subunit contains an active site, located in the central part of the hydrophobic core of the monomer, which functions independently.

In terms of biological role, scytalone dehydratase-like protein; part of the Pks2 gene cluster that mediates the formation of infectious structures (appressoria), enabling these fungi to kill insects faster. The product of the Pks2 gene cluster is different from the one of Pks1 and has still not been identified. The chain is Scytalone dehydratase-like protein Arp1 from Metarhizium guizhouense (strain ARSEF 977).